A 277-amino-acid chain; its full sequence is Putative phosphoenolpyruvate synthase regulatory protein (277 aa).

An ADP-binding site is contributed by 157–164 (GVSRSGKT).

Belongs to the pyruvate, phosphate/water dikinase regulatory protein family. PSRP subfamily.

The catalysed reaction is [pyruvate, water dikinase] + ADP = [pyruvate, water dikinase]-phosphate + AMP + H(+). It catalyses the reaction [pyruvate, water dikinase]-phosphate + phosphate + H(+) = [pyruvate, water dikinase] + diphosphate. Bifunctional serine/threonine kinase and phosphorylase involved in the regulation of the phosphoenolpyruvate synthase (PEPS) by catalyzing its phosphorylation/dephosphorylation. This chain is Putative phosphoenolpyruvate synthase regulatory protein, found in Vibrio vulnificus (strain CMCP6).